The sequence spans 238 residues: tRNA (guanine-N(7)-)-methyltransferase (238 aa).

S-adenosyl-L-methionine is bound by residues E70, D95, D122, and D145. Residue D145 is part of the active site. Substrate contacts are provided by residues K149, D181, and 216-219 (TKFE).

This sequence belongs to the class I-like SAM-binding methyltransferase superfamily. TrmB family.

The catalysed reaction is guanosine(46) in tRNA + S-adenosyl-L-methionine = N(7)-methylguanosine(46) in tRNA + S-adenosyl-L-homocysteine. It functions in the pathway tRNA modification; N(7)-methylguanine-tRNA biosynthesis. Functionally, catalyzes the formation of N(7)-methylguanine at position 46 (m7G46) in tRNA. In Neisseria meningitidis serogroup C / serotype 2a (strain ATCC 700532 / DSM 15464 / FAM18), this protein is tRNA (guanine-N(7)-)-methyltransferase.